Consider the following 313-residue polypeptide: Ornithine carbamoyltransferase (313 aa).

Carbamoyl phosphate-binding positions include serine 61 to threonine 64, glutamine 88, arginine 112, and histidine 139 to glutamine 142. L-ornithine is bound by residues asparagine 170, aspartate 228, and serine 232 to methionine 233. Carbamoyl phosphate is bound by residues cysteine 268–leucine 269 and arginine 296.

It belongs to the aspartate/ornithine carbamoyltransferase superfamily. OTCase family.

It localises to the cytoplasm. It catalyses the reaction carbamoyl phosphate + L-ornithine = L-citrulline + phosphate + H(+). It functions in the pathway amino-acid biosynthesis; L-arginine biosynthesis; L-arginine from L-ornithine and carbamoyl phosphate: step 1/3. Its function is as follows. Reversibly catalyzes the transfer of the carbamoyl group from carbamoyl phosphate (CP) to the N(epsilon) atom of ornithine (ORN) to produce L-citrulline. The sequence is that of Ornithine carbamoyltransferase from Bordetella avium (strain 197N).